Reading from the N-terminus, the 417-residue chain is Serine hydroxymethyltransferase (417 aa).

Residues Leu121 and 125–127 (GHL) each bind (6S)-5,6,7,8-tetrahydrofolate. Lys229 bears the N6-(pyridoxal phosphate)lysine mark. Position 355 to 357 (355 to 357 (SPF)) interacts with (6S)-5,6,7,8-tetrahydrofolate.

Belongs to the SHMT family. In terms of assembly, homodimer. Requires pyridoxal 5'-phosphate as cofactor.

It is found in the cytoplasm. The enzyme catalyses (6R)-5,10-methylene-5,6,7,8-tetrahydrofolate + glycine + H2O = (6S)-5,6,7,8-tetrahydrofolate + L-serine. The protein operates within one-carbon metabolism; tetrahydrofolate interconversion. It functions in the pathway amino-acid biosynthesis; glycine biosynthesis; glycine from L-serine: step 1/1. In terms of biological role, catalyzes the reversible interconversion of serine and glycine with tetrahydrofolate (THF) serving as the one-carbon carrier. This reaction serves as the major source of one-carbon groups required for the biosynthesis of purines, thymidylate, methionine, and other important biomolecules. Also exhibits THF-independent aldolase activity toward beta-hydroxyamino acids, producing glycine and aldehydes, via a retro-aldol mechanism. This is Serine hydroxymethyltransferase from Shewanella baltica (strain OS185).